We begin with the raw amino-acid sequence, 170 residues long: Adenine phosphoribosyltransferase (170 aa).

It belongs to the purine/pyrimidine phosphoribosyltransferase family. In terms of assembly, homodimer.

Its subcellular location is the cytoplasm. It carries out the reaction AMP + diphosphate = 5-phospho-alpha-D-ribose 1-diphosphate + adenine. It participates in purine metabolism; AMP biosynthesis via salvage pathway; AMP from adenine: step 1/1. In terms of biological role, catalyzes a salvage reaction resulting in the formation of AMP, that is energically less costly than de novo synthesis. This chain is Adenine phosphoribosyltransferase, found in Acholeplasma laidlawii (strain PG-8A).